The sequence spans 301 residues: Probable alpha-L-glutamate ligase (301 aa).

One can recognise an ATP-grasp domain in the interval 104–287 (LQLLSRRGIG…VAGMIIEHLE (184 aa)). ATP is bound by residues K141, 178–179 (EY), D187, and 211–213 (RSN). Residues D248, E260, and N262 each coordinate Mg(2+). The Mn(2+) site is built by D248, E260, and N262.

This sequence belongs to the RimK family. Mg(2+) serves as cofactor. The cofactor is Mn(2+).

The sequence is that of Probable alpha-L-glutamate ligase from Pseudomonas putida (strain W619).